A 312-amino-acid polypeptide reads, in one-letter code: Ribosomal RNA small subunit methyltransferase H (312 aa).

S-adenosyl-L-methionine-binding positions include 32–34 (AGH), Asp-52, Phe-79, Asp-100, and Gln-107.

This sequence belongs to the methyltransferase superfamily. RsmH family.

It localises to the cytoplasm. The catalysed reaction is cytidine(1402) in 16S rRNA + S-adenosyl-L-methionine = N(4)-methylcytidine(1402) in 16S rRNA + S-adenosyl-L-homocysteine + H(+). Specifically methylates the N4 position of cytidine in position 1402 (C1402) of 16S rRNA. This chain is Ribosomal RNA small subunit methyltransferase H, found in Listeria monocytogenes serovar 1/2a (strain ATCC BAA-679 / EGD-e).